A 300-amino-acid chain; its full sequence is ESX-5 secretion-associated protein EspG5 (300 aa).

This sequence belongs to the EspG family. As to quaternary structure, interacts specifically with ESX-5-dependent PE/PPE proteins. Binds PPE33 and PPE18. Does not interact with EsxN. Monomer in solution.

It is found in the cytoplasm. Its function is as follows. Specific chaperone for cognate PE/PPE proteins. Plays an important role in preventing aggregation of PE/PPE dimers. Required for LipY and PE31/PPE18 secretion. The chain is ESX-5 secretion-associated protein EspG5 from Mycobacterium marinum (strain ATCC BAA-535 / M).